Here is a 219-residue protein sequence, read N- to C-terminus: Histone H1.4 (219 aa).

Low complexity predominate over residues Met1–Ala15. The tract at residues Met1–Ser41 is disordered. Ser2 is modified (N-acetylserine). Phosphoserine is present on Ser2. At Lys17 the chain carries N6-acetyllysine. A Phosphothreonine modification is found at Thr18. Over residues Val20 to Thr35 the composition is skewed to basic residues. N6-acetyllysine; alternate is present on Lys26. Lys26 carries the N6-methyllysine; alternate modification. An N6-(beta-hydroxybutyryl)lysine; alternate modification is found at Lys34. Lys34 is subject to N6-succinyllysine; alternate. Residue Ser36 is modified to Phosphoserine. Residues Ser36 to Lys109 enclose the H15 domain. At Lys52 the chain carries N6-(beta-hydroxybutyryl)lysine. At Arg54 the chain carries Citrulline. N6-(beta-hydroxybutyryl)lysine occurs at positions 64, 85, 90, and 106. Residues Thr92–Lys219 form a disordered region. The span at Lys119 to Lys140 shows a compositional bias: basic residues. Phosphothreonine is present on Thr146. Composition is skewed to basic residues over residues Lys149–Lys160 and Lys168–Pro185. At Ser150 the chain carries ADP-ribosylserine. The residue at position 187 (Ser187) is a Phosphoserine. A compositionally biased stretch (basic residues) spans Lys192 to Lys219.

It belongs to the histone H1/H5 family. Post-translationally, citrullination at Arg-54 (H1R54ci) by PADI4 takes place within the DNA-binding site of H1 and results in its displacement from chromatin and global chromatin decondensation, thereby promoting pluripotency and stem cell maintenance. ADP-ribosylated on Ser-55, Ser-113 and Ser-150 in response to DNA damage. In terms of processing, H1 histones are progressively phosphorylated during the cell cycle, becoming maximally phosphorylated during late G2 phase and M phase, and being dephosphorylated sharply thereafter. Post-translationally, acetylated at Lys-26. Deacetylated at Lys-26 by SIRT1. Hydroxybutyrylation of histones is induced by starvation.

It is found in the nucleus. It localises to the chromosome. In terms of biological role, histone H1 protein binds to linker DNA between nucleosomes forming the macromolecular structure known as the chromatin fiber. Histones H1 are necessary for the condensation of nucleosome chains into higher-order structured fibers. Also acts as a regulator of individual gene transcription through chromatin remodeling, nucleosome spacing and DNA methylation. In Mus musculus (Mouse), this protein is Histone H1.4.